The chain runs to 176 residues: ATP-dependent protease subunit HslV (176 aa).

Thr6 is a catalytic residue. Na(+) contacts are provided by Ser161, Cys164, and Thr167.

The protein belongs to the peptidase T1B family. HslV subfamily. As to quaternary structure, a double ring-shaped homohexamer of HslV is capped on each side by a ring-shaped HslU homohexamer. The assembly of the HslU/HslV complex is dependent on binding of ATP.

The protein resides in the cytoplasm. The catalysed reaction is ATP-dependent cleavage of peptide bonds with broad specificity.. Allosterically activated by HslU binding. In terms of biological role, protease subunit of a proteasome-like degradation complex believed to be a general protein degrading machinery. This Aquifex aeolicus (strain VF5) protein is ATP-dependent protease subunit HslV.